Reading from the N-terminus, the 700-residue chain is Methionine--tRNA ligase (700 aa).

Residues 16-26 (PYANGAFHVGH) carry the 'HIGH' region motif. Residues Cys148, Cys151, Cys161, and Cys164 each contribute to the Zn(2+) site. A 'KMSKS' region motif is present at residues 337–341 (KMSKS). Lys340 contacts ATP. Residues 594 to 700 (DFAKIDLRIA…PGAEPGMRVG (107 aa)) enclose the tRNA-binding domain.

The protein belongs to the class-I aminoacyl-tRNA synthetase family. MetG type 1 subfamily. Homodimer. Requires Zn(2+) as cofactor.

It is found in the cytoplasm. The enzyme catalyses tRNA(Met) + L-methionine + ATP = L-methionyl-tRNA(Met) + AMP + diphosphate. In terms of biological role, is required not only for elongation of protein synthesis but also for the initiation of all mRNA translation through initiator tRNA(fMet) aminoacylation. This Janthinobacterium sp. (strain Marseille) (Minibacterium massiliensis) protein is Methionine--tRNA ligase.